A 191-amino-acid polypeptide reads, in one-letter code: Protein Ves (191 aa).

The protein belongs to the Ves family.

The protein is Protein Ves of Escherichia coli (strain 55989 / EAEC).